The primary structure comprises 547 residues: Protein RBL (547 aa).

WD repeat units lie at residues 21-60 (LEHG…IAKE), 65-104 (DCSA…KIAR), 214-253 (SGAA…KNVL), 285-332 (EFQD…VKIL), and 334-373 (GPKE…NWSA). Residues 466 to 547 (SPASEEAGQN…GGDDDDDAYY (82 aa)) are disordered. The span at 499–511 (SEKAMELQAEKAK) shows a compositional bias: basic and acidic residues. The span at 530 to 547 (QETDDSINGGDDDDDAYY) shows a compositional bias: acidic residues.

As to quaternary structure, part of a complex composed of TRO, RBL and WDR5A. Interacts with TRO and WDR5A, but not with WDR5B. This complex is formed during both vegetative and reproductive development. In terms of tissue distribution, strongly expressed in root tips, shoot apices, vascular tissues, developing embryos and endosperms.

The protein resides in the nucleus. Its function is as follows. Promotes the expression of FLC and FLC homologs to repress the floral transition. Promotes WRKY70 and LTP7 genes epigenetic methylation (e.g. H3K4me3) and subsequent expression. This chain is Protein RBL, found in Arabidopsis thaliana (Mouse-ear cress).